We begin with the raw amino-acid sequence, 319 residues long: Taste receptor type 2 member 30 (319 aa).

A topological domain (extracellular) is located at residue Met1. Residues 2–22 form a helical membrane-spanning segment; it reads ITFLPIIFSILIVVIFVIGNF. Over 23–46 the chain is Cytoplasmic; it reads ANGFIALVNSIEWVKRQKISFVDQ. A helical transmembrane segment spans residues 47-67; that stretch reads ILTALAVSRVGLLWVLLLHWY. Residues 68-86 are Extracellular-facing; the sequence is ATQLNPAFYSVEVRITVYN. Residues 87-107 traverse the membrane as a helical segment; it reads VWAVTNHFSSWLATSLSMFYL. Over 108–126 the chain is Cytoplasmic; that stretch reads LKIANFSNLIFLRIKRRVK. A helical membrane pass occupies residues 127 to 147; it reads SVVLVILLGPLLFLVCHLFVI. The Extracellular portion of the chain corresponds to 148-178; that stretch reads NMDETIWTKEYEGNMTWKIKLRSAMYHSNMT. Residues Asn161 and Asn176 are each glycosylated (N-linked (GlcNAc...) asparagine). A helical transmembrane segment spans residues 179-199; sequence LTMLANFVPLTLTLISFLLLI. At 200–229 the chain is on the cytoplasmic side; that stretch reads CSLCKHLKKMQLHGKGSQDPSTKVHIKALQ. A helical membrane pass occupies residues 230-250; that stretch reads TVTSFLLLCAIYFLSMIISVC. Over 251–259 the chain is Extracellular; that stretch reads NLGRLEKQP. Residues 260–280 form a helical membrane-spanning segment; the sequence is VFMFCQAIIFSYPSTHPFILI. Residues 281–319 lie on the Cytoplasmic side of the membrane; sequence LGNKKLKQIFLSVLWHVRYWVKDRSLRLHRFTRAALCKG.

It belongs to the G-protein coupled receptor T2R family.

The protein localises to the membrane. In terms of biological role, receptor that may play a role in the perception of bitterness and is gustducin-linked. May play a role in sensing the chemical composition of the gastrointestinal content. The activity of this receptor may stimulate alpha gustducin, mediate PLC-beta-2 activation and lead to the gating of TRPM5. The chain is Taste receptor type 2 member 30 (TAS2R30) from Pan troglodytes (Chimpanzee).